Consider the following 322-residue polypeptide: Tubulin alpha-4 chain (322 aa).

Residues S15, G19, T20, T54, N81, and N103 each contribute to the GTP site. E129 is a catalytic residue.

Belongs to the tubulin family. In terms of assembly, dimer of alpha and beta chains. A typical microtubule is a hollow water-filled tube with an outer diameter of 25 nm and an inner diameter of 15 nM. Alpha-beta heterodimers associate head-to-tail to form protofilaments running lengthwise along the microtubule wall with the beta-tubulin subunit facing the microtubule plus end conferring a structural polarity. Microtubules usually have 13 protofilaments but different protofilament numbers can be found in some organisms and specialized cells. Mg(2+) is required as a cofactor. In terms of processing, some glutamate residues at the C-terminus are polyglycylated, resulting in polyglycine chains on the gamma-carboxyl group. Glycylation is mainly limited to tubulin incorporated into axonemes (cilia and flagella) whereas glutamylation is prevalent in neuronal cells, centrioles, axonemes, and the mitotic spindle. Both modifications can coexist on the same protein on adjacent residues, and lowering polyglycylation levels increases polyglutamylation, and reciprocally. The precise function of polyglycylation is still unclear. Post-translationally, some glutamate residues at the C-terminus are polyglutamylated, resulting in polyglutamate chains on the gamma-carboxyl group. Polyglutamylation plays a key role in microtubule severing by spastin (SPAST). SPAST preferentially recognizes and acts on microtubules decorated with short polyglutamate tails: severing activity by SPAST increases as the number of glutamates per tubulin rises from one to eight, but decreases beyond this glutamylation threshold.

The protein resides in the cytoplasm. It is found in the cytoskeleton. The catalysed reaction is GTP + H2O = GDP + phosphate + H(+). Functionally, tubulin is the major constituent of microtubules, a cylinder consisting of laterally associated linear protofilaments composed of alpha- and beta-tubulin heterodimers. Microtubules grow by the addition of GTP-tubulin dimers to the microtubule end, where a stabilizing cap forms. Below the cap, tubulin dimers are in GDP-bound state, owing to GTPase activity of alpha-tubulin. The protein is Tubulin alpha-4 chain of Gallus gallus (Chicken).